The following is a 450-amino-acid chain: Signal recognition particle 54 kDa protein (450 aa).

GTP is bound by residues 107-114, 188-192, and 247-250; these read GIQGSGKT, DTAGR, and TKLD.

It belongs to the GTP-binding SRP family. SRP54 subfamily. Part of the signal recognition particle protein translocation system, which is composed of SRP and FtsY. Archaeal SRP consists of a 7S RNA molecule of 300 nucleotides and two protein subunits: SRP54 and SRP19.

The protein localises to the cytoplasm. The enzyme catalyses GTP + H2O = GDP + phosphate + H(+). Its function is as follows. Involved in targeting and insertion of nascent membrane proteins into the cytoplasmic membrane. Binds to the hydrophobic signal sequence of the ribosome-nascent chain (RNC) as it emerges from the ribosomes. The SRP-RNC complex is then targeted to the cytoplasmic membrane where it interacts with the SRP receptor FtsY. The polypeptide is Signal recognition particle 54 kDa protein (Methanococcus maripaludis (strain DSM 14266 / JCM 13030 / NBRC 101832 / S2 / LL)).